A 273-amino-acid polypeptide reads, in one-letter code: HTH-type transcriptional activator RhaS (273 aa).

Residues 174–272 (YQLLDWLQNN…SQSPRDLRSQ (99 aa)) enclose the HTH araC/xylS-type domain. DNA-binding regions (H-T-H motif) lie at residues 191 to 212 (PELA…KNKT) and 239 to 262 (VTDI…KREF).

In terms of assembly, binds DNA as a dimer.

The protein localises to the cytoplasm. Functionally, activates expression of the rhaBAD and rhaT operons. The protein is HTH-type transcriptional activator RhaS of Yersinia pestis bv. Antiqua (strain Antiqua).